The primary structure comprises 602 residues: 3-hydroxy-3-methylglutaryl-coenzyme A reductase 2 (602 aa).

Helical transmembrane passes span 44–67 (ASDALPLPLYLTTNGLFFTMFFSV) and 95–115 (AIVSLIASVIYLLGFFGIGFV). The segment at 116-187 (QTFVSRGNND…PLITSASSGE (72 aa)) is linker. N-linked (GlcNAc...) asparagine glycosylation occurs at Asn-124. The segment at 188 to 602 (DEEIIKSVVQ…STKDVTKASS (415 aa)) is catalytic. Glu-281 acts as the Charge relay system in catalysis. Residue Asn-345 is glycosylated (N-linked (GlcNAc...) asparagine). The Charge relay system role is filled by Lys-413. An N-linked (GlcNAc...) asparagine glycan is attached at Asn-458. Asp-489 serves as the catalytic Charge relay system. His-587 functions as the Proton donor in the catalytic mechanism. Residue Asn-591 is glycosylated (N-linked (GlcNAc...) asparagine).

Belongs to the HMG-CoA reductase family.

The protein resides in the endoplasmic reticulum membrane. The catalysed reaction is (R)-mevalonate + 2 NADP(+) + CoA = (3S)-3-hydroxy-3-methylglutaryl-CoA + 2 NADPH + 2 H(+). It functions in the pathway metabolic intermediate biosynthesis; (R)-mevalonate biosynthesis; (R)-mevalonate from acetyl-CoA: step 3/3. Its function is as follows. Catalyzes the synthesis of mevalonate. The specific precursor of all isoprenoid compounds present in plants. The polypeptide is 3-hydroxy-3-methylglutaryl-coenzyme A reductase 2 (HMG2) (Solanum lycopersicum (Tomato)).